We begin with the raw amino-acid sequence, 709 residues long: Elongation factor G (709 aa).

In terms of domain architecture, tr-type G spans 10–295; it reads NQIRNIGIMA…AVVDYLPSPE (286 aa). GTP is bound by residues 19–26, 91–95, and 145–148; these read AHIDAGKT, DTPGH, and NKMD.

The protein belongs to the TRAFAC class translation factor GTPase superfamily. Classic translation factor GTPase family. EF-G/EF-2 subfamily.

It localises to the cytoplasm. Its function is as follows. Catalyzes the GTP-dependent ribosomal translocation step during translation elongation. During this step, the ribosome changes from the pre-translocational (PRE) to the post-translocational (POST) state as the newly formed A-site-bound peptidyl-tRNA and P-site-bound deacylated tRNA move to the P and E sites, respectively. Catalyzes the coordinated movement of the two tRNA molecules, the mRNA and conformational changes in the ribosome. In Bifidobacterium adolescentis (strain ATCC 15703 / DSM 20083 / NCTC 11814 / E194a), this protein is Elongation factor G.